A 367-amino-acid chain; its full sequence is Flagellar P-ring protein (367 aa).

A signal peptide spans 1–21 (MYVFKALAGIVLALVATLAHA).

The protein belongs to the FlgI family. In terms of assembly, the basal body constitutes a major portion of the flagellar organelle and consists of four rings (L,P,S, and M) mounted on a central rod.

The protein resides in the periplasm. The protein localises to the bacterial flagellum basal body. Assembles around the rod to form the L-ring and probably protects the motor/basal body from shearing forces during rotation. In Salmonella paratyphi C (strain RKS4594), this protein is Flagellar P-ring protein.